A 173-amino-acid chain; its full sequence is Signal peptidase complex catalytic subunit sec11 (173 aa).

Residues methionine 1–glutamine 15 are Cytoplasmic-facing. Residues isoleucine 16–valine 36 form a helical; Signal-anchor for type II membrane protein membrane-spanning segment. Residues serine 37–glutamate 173 lie on the Lumenal side of the membrane. Catalysis depends on charge relay system residues serine 50, histidine 89, and aspartate 115. Residues valine 159–leucine 170 are C-terminal short (CTS) helix.

This sequence belongs to the peptidase S26B family. As to quaternary structure, component of the signal peptidase complex (SPC) composed of a catalytic subunit SEC11 and three accessory subunits SPC1, SPC2 and SPC3. The complex induces a local thinning of the ER membrane which is used to measure the length of the signal peptide (SP) h-region of protein substrates. This ensures the selectivity of the complex towards h-regions shorter than 18-20 amino acids. SPC associates with the translocon complex.

Its subcellular location is the endoplasmic reticulum membrane. The enzyme catalyses Cleavage of hydrophobic, N-terminal signal or leader sequences from secreted and periplasmic proteins.. Functionally, catalytic component of the signal peptidase complex (SPC) which catalyzes the cleavage of N-terminal signal sequences from nascent proteins as they are translocated into the lumen of the endoplasmic reticulum. Specifically cleaves N-terminal signal peptides that contain a hydrophobic alpha-helix (h-region) shorter than 18-20 amino acids. This is Signal peptidase complex catalytic subunit sec11 (sec11) from Pyrenophora tritici-repentis (strain Pt-1C-BFP) (Wheat tan spot fungus).